Consider the following 430-residue polypeptide: Adenylosuccinate synthetase (430 aa).

GTP-binding positions include 11–17 (GDEGKGK) and 39–41 (GHS). Residue Asp-12 is the Proton acceptor of the active site. Mg(2+) is bound by residues Asp-12 and Gly-39. Residues 12-15 (DEGK), 37-40 (NAGH), Thr-129, Arg-143, Asn-221, Thr-236, and Arg-300 each bind IMP. The Proton donor role is filled by His-40. 296–302 (VSTGRKR) lines the substrate pocket. Residues Arg-302, 328–330 (KLD), and 412–414 (GTG) contribute to the GTP site.

The protein belongs to the adenylosuccinate synthetase family. In terms of assembly, homodimer. It depends on Mg(2+) as a cofactor.

Its subcellular location is the cytoplasm. It catalyses the reaction IMP + L-aspartate + GTP = N(6)-(1,2-dicarboxyethyl)-AMP + GDP + phosphate + 2 H(+). It participates in purine metabolism; AMP biosynthesis via de novo pathway; AMP from IMP: step 1/2. Plays an important role in the de novo pathway and in the salvage pathway of purine nucleotide biosynthesis. Catalyzes the first committed step in the biosynthesis of AMP from IMP. The chain is Adenylosuccinate synthetase from Neurospora crassa (strain ATCC 24698 / 74-OR23-1A / CBS 708.71 / DSM 1257 / FGSC 987).